The chain runs to 268 residues: UPF0328 protein ECU03_0040 (268 aa).

It belongs to the UPF0328 family.

This chain is UPF0328 protein ECU03_0040, found in Encephalitozoon cuniculi (strain GB-M1) (Microsporidian parasite).